A 224-amino-acid chain; its full sequence is MADS-box transcription factor 16 (224 aa).

One can recognise an MADS-box domain in the interval 1–61 (MGRGKIEIKR…GKYHEFCSPS (61 aa)). Positions 84–174 (YENMQRTLSH…QQELGLREEP (91 aa)) constitute a K-box domain.

As to quaternary structure, may interact with the K-box of MADS4, MADS6 and MADS8. May form a heterodimer with MADS4. In terms of tissue distribution, expressed in lodicules, stamens and carpels.

The protein localises to the nucleus. Its function is as follows. Probable transcription factor involved in the development of floral organs. Required for normal development of lodicules and stamens (whorls 2 and 3). May function as a heterodimer with MADS4. In Oryza sativa subsp. japonica (Rice), this protein is MADS-box transcription factor 16 (MADS16).